The chain runs to 305 residues: Serine/threonine-protein kinase 16 (305 aa).

A lipid anchor (N-myristoyl glycine) is attached at Gly-2. 2 S-palmitoyl cysteine lipidation sites follow: Cys-6 and Cys-8. Positions 20–293 (YLFIQKLGEG…PLLLSQLEAL (274 aa)) constitute a Protein kinase domain. ATP is bound by residues 26–34 (LGEGGFSYV) and Lys-49. Asp-148 serves as the catalytic Proton acceptor. The interval 166-202 (DLGSMNQACIHVEGSRQALTLQDWAAQRCTISYRAPE) is activation loop. Position 185 is a phosphothreonine; by autocatalysis (Thr-185). Ser-197 carries the post-translational modification Phosphoserine; by autocatalysis. Tyr-198 is subject to Phosphotyrosine; by autocatalysis.

The protein belongs to the protein kinase superfamily. Ser/Thr protein kinase family. Monomer. Interacts with DRG1 (via its N-terminal); the interaction phosphorylates DRG1. Post-translationally, mainly autophosphorylated on serine/threonine residues. Also autophosphorylated on Tyr-198. It is uncertain whether palmitoylation is on Cys-6 and/or Cys-8. In terms of tissue distribution, ubiquitously expressed at very low levels.

It localises to the cytoplasm. The protein localises to the perinuclear region. It is found in the membrane. It catalyses the reaction L-seryl-[protein] + ATP = O-phospho-L-seryl-[protein] + ADP + H(+). The enzyme catalyses L-threonyl-[protein] + ATP = O-phospho-L-threonyl-[protein] + ADP + H(+). The catalysed reaction is L-tyrosyl-[protein] + ATP = O-phospho-L-tyrosyl-[protein] + ADP + H(+). Functionally, membrane-associated protein kinase that phosphorylates on serine and threonine residues. In vitro substrates include DRG1, ENO1 and EIF4EBP1. Also autophosphorylates. May be involved in secretory vesicle trafficking or intracellular signaling. May have a role in regulating stromal-epithelial interactions that occur during ductal morphogenesis in the mammary gland. May be involved in TGF-beta signaling. Able to autophosphorylate on Tyr residue; it is however unclear whether it has tyrosine-protein kinase toward other proteins. The protein is Serine/threonine-protein kinase 16 (STK16) of Homo sapiens (Human).